A 228-amino-acid chain; its full sequence is Orotate phosphoribosyltransferase (228 aa).

Lysine 26 is a 5-phospho-alpha-D-ribose 1-diphosphate binding site. Residue 34-35 participates in orotate binding; that stretch reads FF. 5-phospho-alpha-D-ribose 1-diphosphate is bound by residues 72–73, arginine 98, lysine 99, lysine 102, histidine 104, and 123–131; these read YK and DDVISAGTS. Positions 127 and 155 each coordinate orotate.

It belongs to the purine/pyrimidine phosphoribosyltransferase family. PyrE subfamily. As to quaternary structure, homodimer. Requires Mg(2+) as cofactor.

The enzyme catalyses orotidine 5'-phosphate + diphosphate = orotate + 5-phospho-alpha-D-ribose 1-diphosphate. Its pathway is pyrimidine metabolism; UMP biosynthesis via de novo pathway; UMP from orotate: step 1/2. In terms of biological role, catalyzes the transfer of a ribosyl phosphate group from 5-phosphoribose 1-diphosphate to orotate, leading to the formation of orotidine monophosphate (OMP). The chain is Orotate phosphoribosyltransferase from Nitrosospira multiformis (strain ATCC 25196 / NCIMB 11849 / C 71).